We begin with the raw amino-acid sequence, 330 residues long: ADP-L-glycero-D-manno-heptose-6-epimerase (330 aa).

NADP(+) is bound by residues 11–12, 32–33, lysine 39, lysine 54, 75–79, and asparagine 92; these read FI, DN, and EGACS. The active-site Proton acceptor is the tyrosine 139. Residue lysine 143 participates in NADP(+) binding. Asparagine 168 is a substrate binding site. Residues valine 169 and lysine 177 each coordinate NADP(+). Catalysis depends on lysine 177, which acts as the Proton acceptor. Substrate contacts are provided by residues arginine 179, histidine 186, 200–203, arginine 213, and tyrosine 292; that span reads FGEY.

The protein belongs to the NAD(P)-dependent epimerase/dehydratase family. HldD subfamily. In terms of assembly, homopentamer. Requires NADP(+) as cofactor.

It carries out the reaction ADP-D-glycero-beta-D-manno-heptose = ADP-L-glycero-beta-D-manno-heptose. It functions in the pathway nucleotide-sugar biosynthesis; ADP-L-glycero-beta-D-manno-heptose biosynthesis; ADP-L-glycero-beta-D-manno-heptose from D-glycero-beta-D-manno-heptose 7-phosphate: step 4/4. In terms of biological role, catalyzes the interconversion between ADP-D-glycero-beta-D-manno-heptose and ADP-L-glycero-beta-D-manno-heptose via an epimerization at carbon 6 of the heptose. The polypeptide is ADP-L-glycero-D-manno-heptose-6-epimerase (Burkholderia ambifaria (strain MC40-6)).